Reading from the N-terminus, the 283-residue chain is MARHVWQAGRFEIGLDKPKIMGIVNLTPDSFSDGGVYSQNAQTALAHAEQLLKEGADILDIGGESTRSGADYVSPEEEWARVEPVLAEVAGWGVPISLDTRRTVIMEKALALGGIDIINDVAALNDEGAVELLARQADTGICLMHMQGLPKNMQINPKYQDVVGEVARYLKARAAECIAAGIAPQRITLDPGFCFGKTLQHNITLMRHLPELMAETGYPLLIGVSRKSMIGELTGETDAAARGHGSVAAALAAVARGAKIVRVHDVKATADALKAWEALGINL.

In terms of domain architecture, Pterin-binding spans 18–274 (PKIMGIVNLT…DVKATADALK (257 aa)). Residue Asn25 participates in Mg(2+) binding. (7,8-dihydropterin-6-yl)methyl diphosphate contacts are provided by residues Thr66, Asp99, Asn119, Asp190, Lys227, and 262 to 264 (RVH).

This sequence belongs to the DHPS family. As to quaternary structure, homodimer. It depends on Mg(2+) as a cofactor.

It carries out the reaction (7,8-dihydropterin-6-yl)methyl diphosphate + 4-aminobenzoate = 7,8-dihydropteroate + diphosphate. It functions in the pathway cofactor biosynthesis; tetrahydrofolate biosynthesis; 7,8-dihydrofolate from 2-amino-4-hydroxy-6-hydroxymethyl-7,8-dihydropteridine diphosphate and 4-aminobenzoate: step 1/2. Catalyzes the condensation of para-aminobenzoate (pABA) with 6-hydroxymethyl-7,8-dihydropterin diphosphate (DHPt-PP) to form 7,8-dihydropteroate (H2Pte), the immediate precursor of folate derivatives. This is Dihydropteroate synthase (folP) from Neisseria meningitidis serogroup C.